A 484-amino-acid polypeptide reads, in one-letter code: Putative beta-barrel assembly-enhancing protease (484 aa).

Positions 1–23 (MKFFPTRTLLCLCIAAPCLPAIA) are cleaved as a signal peptide. Histidine 133 is a Zn(2+) binding site. Residue glutamate 134 is part of the active site. 2 residues coordinate Zn(2+): histidine 137 and glutamate 198. Residue aspartate 202 is the Proton donor of the active site. TPR repeat units lie at residues 307–340 (PSIQYGKALVYLDLKQFDKAEPLLTQLVKEQPDN), 341–374 (HFYLDAISDLYIELKQADKAQSLLEKALKQTPNN), 376–408 (VLTINYANVLLKQDKFTDAIRILQRYTHDNPND), and 426–459 (AEDLAARGEIMALQANWNKAIQFYTQASQLVELG).

The protein belongs to the peptidase M48 family. BepA subfamily. The cofactor is Zn(2+).

It localises to the periplasm. Its function is as follows. Functions both as a chaperone and a metalloprotease. Maintains the integrity of the outer membrane by promoting either the assembly or the elimination of outer membrane proteins, depending on their folding state. The protein is Putative beta-barrel assembly-enhancing protease of Vibrio cholerae serotype O1 (strain ATCC 39315 / El Tor Inaba N16961).